Reading from the N-terminus, the 97-residue chain is Citrate lyase acyl carrier protein (97 aa).

Position 14 is an O-(phosphoribosyl dephospho-coenzyme A)serine (Ser-14).

This sequence belongs to the CitD family. In terms of assembly, oligomer with a subunit composition of (alpha,beta,gamma)6.

It is found in the cytoplasm. In terms of biological role, covalent carrier of the coenzyme of citrate lyase. The chain is Citrate lyase acyl carrier protein from Yersinia enterocolitica serotype O:8 / biotype 1B (strain NCTC 13174 / 8081).